The chain runs to 661 residues: Solute carrier organic anion transporter family member 1A4 (661 aa).

The Cytoplasmic segment spans residues M1–K20. A helical membrane pass occupies residues M21–M40. Residues N41 to G59 are Extracellular-facing. The helical transmembrane segment at L60–G80 threads the bilayer. The Cytoplasmic portion of the chain corresponds to T81–P86. Residues I87–G111 form a helical membrane-spanning segment. At Q112–S154 the chain is on the extracellular side. Residues N123 and N134 are each glycosylated (N-linked (GlcNAc...) asparagine). A helical membrane pass occupies residues L155–E183. Residues D184 to M202 lie on the Cytoplasmic side of the membrane. The helical transmembrane segment at T203–I223 threads the bilayer. At E224 to V241 the chain is on the extracellular side. Residues G242–P266 traverse the membrane as a helical segment. The Cytoplasmic portion of the chain corresponds to K267–S310. Residues L311–I332 traverse the membrane as a helical segment. Topologically, residues N333–E352 are extracellular. The helical transmembrane segment at V353–M376 threads the bilayer. The Cytoplasmic segment spans residues K377–K380. Residues V381 to S404 form a helical membrane-spanning segment. At Y405–F512 the chain is on the extracellular side. Positions N432 to Q487 constitute a Kazal-like domain. 3 disulfide bridges follow: C438/C468, C444/C464, and C453/C485. N443 is a glycosylation site (N-linked (GlcNAc...) asparagine). Residues N482 and N491 are each glycosylated (N-linked (GlcNAc...) asparagine). A helical transmembrane segment spans residues L513–L535. Over R536–S544 the chain is Cytoplasmic. A helical transmembrane segment spans residues L545 to I570. Residues D571–P604 lie on the Extracellular side of the membrane. The helical transmembrane segment at A605–T622 threads the bilayer. Residues R623–D661 are Cytoplasmic-facing. Phosphoserine is present on residues S633 and S634.

This sequence belongs to the organo anion transporter (TC 2.A.60) family. Highly expressed in brain, liver, and kidney but not expressed in heart, spleen, lung, skeletal muscle, and testis.

Its subcellular location is the cell membrane. The enzyme catalyses estrone 3-sulfate(out) = estrone 3-sulfate(in). The catalysed reaction is taurocholate(out) = taurocholate(in). It catalyses the reaction prostaglandin E2(out) = prostaglandin E2(in). It carries out the reaction L-thyroxine(out) = L-thyroxine(in). Its function is as follows. Mediates the Na(+)-independent transport of organic anions such as taurocholate, cholate, 17-beta-glucuronosyl estradiol, prostaglandin E2, estrone 3-sulfate, L-thyroxine (T4), the cardiac glycosides ouabain and digoxin and thyroid hormones. May play an especially important role in the brain accumulation and toxicity of digoxin and in the hepatobiliary and renal excretion of cardiac glycosides. Shows a pH-sensitive substrate specificity which may be ascribed to the protonation state of the binding site and leads to a stimulation of substrate transport in an acidic microenvironment. Hydrogencarbonate/HCO3(-) acts as the probable counteranion that exchanges for organic anions. This is Solute carrier organic anion transporter family member 1A4 (Slco1a4) from Rattus norvegicus (Rat).